Here is a 120-residue protein sequence, read N- to C-terminus: Large ribosomal subunit protein bL19 (120 aa).

This sequence belongs to the bacterial ribosomal protein bL19 family.

In terms of biological role, this protein is located at the 30S-50S ribosomal subunit interface and may play a role in the structure and function of the aminoacyl-tRNA binding site. The polypeptide is Large ribosomal subunit protein bL19 (Chlorobium chlorochromatii (strain CaD3)).